A 191-amino-acid chain; its full sequence is Programmed cell death protein 6 (191 aa).

An N-acetylalanine modification is found at Ala2. EF-hand domains follow at residues 23–58 (PDQS…GTWT), 59–89 (PFNP…TGVW), 90–125 (KYIT…FGYR), 126–161 (LSDQ…LQRL), and 162–191 (TDIF…FSIV). 5 residues coordinate Ca(2+): Asp36, Asp38, Ser40, Val42, and Glu47. Ca(2+) is bound by residues Asp103, Asp105, Ser107, Met109, and Glu114. Positions 169, 171, 173, and 175 each coordinate Mg(2+).

As to quaternary structure, homodimer and heterodimer; heterodimerizes (via the EF-hand 5) with PEF1. Isoform 1 and isoform 2 self-associate; probably forming homodimers. Interacts with CPNE4 (via VWFA domain). Interacts with PDCD6IP; the interaction is calcium-dependent. Interacts with RBM22. Interacts with PLSCR4. Interacts with ANXA7 and TSG101. Interacts with DAPK1. Interacts with SEC31A; the interaction is calcium-dependent and promotes monoubiquitination of SEC31A. Interacts with ANXA11 (via N-terminus); the interaction is calcium-dependent. Interacts with PLSCR3 (via N-terminus); the interaction is calcium-dependent. Interacts with MCOLN1; the interaction is calcium-dependent. Interacts with KDR; the interaction is calcium-dependent. Interacts with HEBP2; the interaction is calcium-dependent. Interacts with TFG. Isoform 1: Interacts with SHISA5, leading to stabilize it. Isoform 2: Does not interact with SHISA5. Isoform 2: Does not interact with PDCD6IP, TSG101, ANXA7 and ANXA11.

The protein localises to the endoplasmic reticulum membrane. It is found in the cytoplasmic vesicle. Its subcellular location is the COPII-coated vesicle membrane. It localises to the cytoplasm. The protein resides in the nucleus. The protein localises to the endosome. Functionally, calcium sensor that plays a key role in processes such as endoplasmic reticulum (ER)-Golgi vesicular transport, endosomal biogenesis or membrane repair. Acts as an adapter that bridges unrelated proteins or stabilizes weak protein-protein complexes in response to calcium: calcium-binding triggers exposure of apolar surface, promoting interaction with different sets of proteins thanks to 3 different hydrophobic pockets, leading to translocation to membranes. Involved in ER-Golgi transport by promoting the association between PDCD6IP and TSG101, thereby bridging together the ESCRT-III and ESCRT-I complexes. Together with PEF1, acts as a calcium-dependent adapter for the BCR(KLHL12) complex, a complex involved in ER-Golgi transport by regulating the size of COPII coats. In response to cytosolic calcium increase, the heterodimer formed with PEF1 interacts with, and bridges together the BCR(KLHL12) complex and SEC31 (SEC31A or SEC31B), promoting monoubiquitination of SEC31 and subsequent collagen export, which is required for neural crest specification. Involved in the regulation of the distribution and function of MCOLN1 in the endosomal pathway. Promotes localization and polymerization of TFG at endoplasmic reticulum exit site. Required for T-cell receptor-, Fas-, and glucocorticoid-induced apoptosis. May mediate Ca(2+)-regulated signals along the death pathway: interaction with DAPK1 can accelerate apoptotic cell death by increasing caspase-3 activity. Its role in apoptosis may however be indirect, as suggested by knockout experiments. May inhibit KDR/VEGFR2-dependent angiogenesis; the function involves inhibition of VEGF-induced phosphorylation of the Akt signaling pathway. Its function is as follows. Has a lower Ca(2+) affinity than isoform 1. The chain is Programmed cell death protein 6 (Pdcd6) from Mus musculus (Mouse).